A 645-amino-acid polypeptide reads, in one-letter code: Meiosis induction protein kinase IME2/SME1 (645 aa).

The tract at residues 1-24 is disordered; that stretch reads MVEKRSRQSSSSGSEFSVPPDVDN. Positions 8-17 are enriched in low complexity; the sequence is QSSSSGSEFS. A Protein kinase domain is found at 38-386; that stretch reads YQLIEKLGAG…AQELCEMPFF (349 aa). ATP is bound by residues 44–52 and K67; that span reads LGAGSFGCV. Catalysis depends on D193, which acts as the Proton acceptor.

The protein belongs to the protein kinase superfamily. Ser/Thr protein kinase family.

The enzyme catalyses L-seryl-[protein] + ATP = O-phospho-L-seryl-[protein] + ADP + H(+). It carries out the reaction L-threonyl-[protein] + ATP = O-phospho-L-threonyl-[protein] + ADP + H(+). In terms of biological role, protein kinase which is essential for the initiation of meiosis and sporulation. The chain is Meiosis induction protein kinase IME2/SME1 (IME2) from Saccharomyces cerevisiae (strain ATCC 204508 / S288c) (Baker's yeast).